The primary structure comprises 552 residues: CTP synthase (552 aa).

The segment at 1–265 (MTKYIFITGG…DEIVVRKLRL (265 aa)) is amidoligase domain. A CTP-binding site is contributed by Ser13. Ser13 is a UTP binding site. ATP contacts are provided by residues 14 to 19 (SLGKGI) and Asp71. Positions 71 and 139 each coordinate Mg(2+). Residues 146–148 (DIE), 186–191 (KTKPTQ), and Lys222 each bind CTP. UTP contacts are provided by residues 186 to 191 (KTKPTQ) and Lys222. A Glutamine amidotransferase type-1 domain is found at 290–541 (TVAMVGKYVN…VRAARARSEG (252 aa)). Residue Gly351 coordinates L-glutamine. The active-site Nucleophile; for glutamine hydrolysis is Cys378. L-glutamine is bound by residues 379–382 (LGMQ), Glu402, and Arg469. Active-site residues include His514 and Glu516.

The protein belongs to the CTP synthase family. As to quaternary structure, homotetramer.

The enzyme catalyses UTP + L-glutamine + ATP + H2O = CTP + L-glutamate + ADP + phosphate + 2 H(+). It catalyses the reaction L-glutamine + H2O = L-glutamate + NH4(+). The catalysed reaction is UTP + NH4(+) + ATP = CTP + ADP + phosphate + 2 H(+). The protein operates within pyrimidine metabolism; CTP biosynthesis via de novo pathway; CTP from UDP: step 2/2. Allosterically activated by GTP, when glutamine is the substrate; GTP has no effect on the reaction when ammonia is the substrate. The allosteric effector GTP functions by stabilizing the protein conformation that binds the tetrahedral intermediate(s) formed during glutamine hydrolysis. Inhibited by the product CTP, via allosteric rather than competitive inhibition. Its function is as follows. Catalyzes the ATP-dependent amination of UTP to CTP with either L-glutamine or ammonia as the source of nitrogen. Regulates intracellular CTP levels through interactions with the four ribonucleotide triphosphates. This is CTP synthase from Methylococcus capsulatus (strain ATCC 33009 / NCIMB 11132 / Bath).